A 328-amino-acid polypeptide reads, in one-letter code: uncharacterized protein (328 aa).

Positions L37–I179 constitute an SIS domain. ATP is bound at residue G52–G57. 2 CBS domains span residues L205 to I264 and M273 to L328.

It belongs to the SIS family. GutQ/KpsF subfamily.

This is an uncharacterized protein from Chlamydia muridarum (strain MoPn / Nigg).